A 204-amino-acid polypeptide reads, in one-letter code: UPF0134 protein MPN_655 (204 aa).

The disordered stretch occupies residues 46-132 (EVENKPKIPI…FNEFKDSNNQ (87 aa)). Residues 64–80 (SPKPLKPPKPPKPPKGP) are compositionally biased toward pro residues. The segment covering 117–132 (YVTRKEFNEFKDSNNQ) has biased composition (basic and acidic residues).

This sequence belongs to the UPF0134 family.

The polypeptide is UPF0134 protein MPN_655 (Mycoplasma pneumoniae (strain ATCC 29342 / M129 / Subtype 1) (Mycoplasmoides pneumoniae)).